The following is a 217-amino-acid chain: Octanoyltransferase (217 aa).

A BPL/LPL catalytic domain is found at 35–214; sequence DEAGERIWLL…TLPAFLDKLR (180 aa). Substrate-binding positions include 73 to 80, 145 to 147, and 158 to 160; these read RGGRYTYH, AIG, and GFS. Catalysis depends on Cys176, which acts as the Acyl-thioester intermediate.

It belongs to the LipB family.

The protein resides in the cytoplasm. The enzyme catalyses octanoyl-[ACP] + L-lysyl-[protein] = N(6)-octanoyl-L-lysyl-[protein] + holo-[ACP] + H(+). The protein operates within protein modification; protein lipoylation via endogenous pathway; protein N(6)-(lipoyl)lysine from octanoyl-[acyl-carrier-protein]: step 1/2. In terms of biological role, catalyzes the transfer of endogenously produced octanoic acid from octanoyl-acyl-carrier-protein onto the lipoyl domains of lipoate-dependent enzymes. Lipoyl-ACP can also act as a substrate although octanoyl-ACP is likely to be the physiological substrate. This Sphingopyxis alaskensis (strain DSM 13593 / LMG 18877 / RB2256) (Sphingomonas alaskensis) protein is Octanoyltransferase.